The chain runs to 39 residues: Potassium channel toxin alpha-KTx 2.23 (39 aa).

Cystine bridges form between Cys-7–Cys-29, Cys-13–Cys-34, and Cys-17–Cys-36.

In terms of tissue distribution, expressed by the venom gland.

It localises to the secreted. In terms of biological role, blocks human voltage-gated potassium (Kv) channels Kv1.1/KCNA1, Kv1.2/KCNA2 and Kv1.3/KCNA3. This chain is Potassium channel toxin alpha-KTx 2.23, found in Centruroides bonito (Scorpion).